The following is a 190-amino-acid chain: Probable nicotinate-nucleotide adenylyltransferase (190 aa).

It belongs to the NadD family.

The catalysed reaction is nicotinate beta-D-ribonucleotide + ATP + H(+) = deamido-NAD(+) + diphosphate. It participates in cofactor biosynthesis; NAD(+) biosynthesis; deamido-NAD(+) from nicotinate D-ribonucleotide: step 1/1. In terms of biological role, catalyzes the reversible adenylation of nicotinate mononucleotide (NaMN) to nicotinic acid adenine dinucleotide (NaAD). The protein is Probable nicotinate-nucleotide adenylyltransferase of Frankia alni (strain DSM 45986 / CECT 9034 / ACN14a).